A 117-amino-acid chain; its full sequence is Mini-circle uncharacterized 12.9 kDa protein (117 aa).

The protein is Mini-circle uncharacterized 12.9 kDa protein of Streptomyces coelicolor (strain ATCC BAA-471 / A3(2) / M145).